The following is a 78-amino-acid chain: Large ribosomal subunit protein eL38 (78 aa).

Belongs to the eukaryotic ribosomal protein eL38 family. In terms of assembly, component of the large ribosomal subunit. Mature ribosomes consist of a small (40S) and a large (60S) subunit. The 40S subunit contains about 32 different proteins and 1 molecule of RNA (18S). The 60S subunit contains 45 different proteins and 3 molecules of RNA (25S, 5.8S and 5S).

Its subcellular location is the cytoplasm. Functionally, component of the ribosome, a large ribonucleoprotein complex responsible for the synthesis of proteins in the cell. The small ribosomal subunit (SSU) binds messenger RNAs (mRNAs) and translates the encoded message by selecting cognate aminoacyl-transfer RNA (tRNA) molecules. The large subunit (LSU) contains the ribosomal catalytic site termed the peptidyl transferase center (PTC), which catalyzes the formation of peptide bonds, thereby polymerizing the amino acids delivered by tRNAs into a polypeptide chain. The nascent polypeptides leave the ribosome through a tunnel in the LSU and interact with protein factors that function in enzymatic processing, targeting, and the membrane insertion of nascent chains at the exit of the ribosomal tunnel. This chain is Large ribosomal subunit protein eL38, found in Candida albicans (strain SC5314 / ATCC MYA-2876) (Yeast).